Reading from the N-terminus, the 144-residue chain is uncharacterized protein (144 aa).

4 helical membrane-spanning segments follow: residues 16–36 (FLIF…GAIF), 48–68 (GFIV…ALII), 87–107 (LLPE…LVLL), and 120–140 (VMSL…WYFG).

It is found in the cell membrane. This is an uncharacterized protein from Methanocaldococcus jannaschii (strain ATCC 43067 / DSM 2661 / JAL-1 / JCM 10045 / NBRC 100440) (Methanococcus jannaschii).